Here is a 493-residue protein sequence, read N- to C-terminus: Chromosomal replication initiator protein DnaA (493 aa).

The domain I, interacts with DnaA modulators stretch occupies residues 1 to 105 (MSDTIQQEAP…LMYSIVIDKS (105 aa)). The interval 105 to 152 (SQGQPVTIELPHQIDAAPAERSVRPEAPGQKASAERERLEIARPRFES) is domain II. The interval 121–140 (APAERSVRPEAPGQKASAER) is disordered. The segment at 153 to 370 (NLNPKYTFST…GCIVKLLAAH (218 aa)) is domain III, AAA+ region. ATP is bound by residues Gly-198, Gly-200, Lys-201, and Thr-202. The tract at residues 371–493 (SLDNQEIDLQ…LRKRIEIMSM (123 aa)) is domain IV, binds dsDNA.

It belongs to the DnaA family. In terms of assembly, oligomerizes as a right-handed, spiral filament on DNA at oriC.

It is found in the cytoplasm. In terms of biological role, plays an essential role in the initiation and regulation of chromosomal replication. ATP-DnaA binds to the origin of replication (oriC) to initiate formation of the DNA replication initiation complex once per cell cycle. Binds the DnaA box (a 9 base pair repeat at the origin) and separates the double-stranded (ds)DNA. Forms a right-handed helical filament on oriC DNA; dsDNA binds to the exterior of the filament while single-stranded (ss)DNA is stabiized in the filament's interior. The ATP-DnaA-oriC complex binds and stabilizes one strand of the AT-rich DNA unwinding element (DUE), permitting loading of DNA polymerase. After initiation quickly degrades to an ADP-DnaA complex that is not apt for DNA replication. Binds acidic phospholipids. The protein is Chromosomal replication initiator protein DnaA of Chlorobaculum tepidum (strain ATCC 49652 / DSM 12025 / NBRC 103806 / TLS) (Chlorobium tepidum).